We begin with the raw amino-acid sequence, 173 residues long: Co-chaperone protein HscB (173 aa).

The region spanning 2-74 (DYFTLFGLPA…LKRAEYMLSL (73 aa)) is the J domain.

It belongs to the HscB family. In terms of assembly, interacts with HscA and stimulates its ATPase activity. Interacts with IscU.

In terms of biological role, co-chaperone involved in the maturation of iron-sulfur cluster-containing proteins. Seems to help targeting proteins to be folded toward HscA. This is Co-chaperone protein HscB from Photorhabdus laumondii subsp. laumondii (strain DSM 15139 / CIP 105565 / TT01) (Photorhabdus luminescens subsp. laumondii).